The following is a 102-amino-acid chain: uncharacterized protein (102 aa).

Residues 29–52 traverse the membrane as a helical segment; sequence IGSTYFCFGGAIFILVAPLTNLVY.

The protein localises to the membrane. This is an uncharacterized protein from Saccharomyces cerevisiae (strain ATCC 204508 / S288c) (Baker's yeast).